The sequence spans 65 residues: Large ribosomal subunit protein uL29 (65 aa).

Belongs to the universal ribosomal protein uL29 family.

The polypeptide is Large ribosomal subunit protein uL29 (Buchnera aphidicola subsp. Acyrthosiphon pisum (strain 5A)).